Reading from the N-terminus, the 455-residue chain is Genome polyprotein (455 aa).

C5 acts as the For nuclear inclusion protein A activity in catalysis. Over residues 182-198 the composition is skewed to basic and acidic residues; that stretch reads NLDAGKESKKETSDKGN. The disordered stretch occupies residues 182-225; the sequence is NLDAGKESKKETSDKGNKPQNSQVGQGSKEPTKTGTVSKDVNVG.

The protein belongs to the potyviridae genome polyprotein family. Post-translationally, genome polyprotein of potyviruses undergoes post-translational proteolytic processing by the main proteinase NIa-pro resulting in the production of at least ten individual proteins. The P1 proteinase and the HC-pro cleave only their respective C-termini autocatalytically. 6K1 is essential for proper proteolytic separation of P3 from CI.

It localises to the virion. It carries out the reaction RNA(n) + a ribonucleoside 5'-triphosphate = RNA(n+1) + diphosphate. An RNA-dependent RNA polymerase that plays an essential role in the virus replication. Functionally, involved in aphid transmission, cell-to-cell and systemis movement, encapsidation of the viral RNA and in the regulation of viral RNA amplification. The polypeptide is Genome polyprotein (Citrullus lanatus (Watermelon)).